The chain runs to 284 residues: Bifunctional protein FolD (284 aa).

NADP(+)-binding positions include 166-168 and S191; that span reads GRS.

Belongs to the tetrahydrofolate dehydrogenase/cyclohydrolase family. As to quaternary structure, homodimer.

It carries out the reaction (6R)-5,10-methylene-5,6,7,8-tetrahydrofolate + NADP(+) = (6R)-5,10-methenyltetrahydrofolate + NADPH. The enzyme catalyses (6R)-5,10-methenyltetrahydrofolate + H2O = (6R)-10-formyltetrahydrofolate + H(+). The protein operates within one-carbon metabolism; tetrahydrofolate interconversion. Its function is as follows. Catalyzes the oxidation of 5,10-methylenetetrahydrofolate to 5,10-methenyltetrahydrofolate and then the hydrolysis of 5,10-methenyltetrahydrofolate to 10-formyltetrahydrofolate. In Delftia acidovorans (strain DSM 14801 / SPH-1), this protein is Bifunctional protein FolD.